The primary structure comprises 61 residues: uncharacterized protein (61 aa).

The next 2 helical transmembrane spans lie at 5–25 (MLYFLIYFAVTHLPSLISLLL) and 29–49 (YILTLLFIVLHILFIWLPWYT).

The protein localises to the membrane. This is an uncharacterized protein from Saccharomyces cerevisiae (strain ATCC 204508 / S288c) (Baker's yeast).